Reading from the N-terminus, the 257-residue chain is Phosphatidylglycerol--prolipoprotein diacylglyceryl transferase (257 aa).

Helical transmembrane passes span 12 to 32 (FSIR…VYLA), 49 to 69 (FILM…VIFE), 83 to 103 (IWNG…LLVI), and 109 to 129 (LINP…AQAI). R131 contributes to the a 1,2-diacyl-sn-glycero-3-phospho-(1'-sn-glycerol) binding site. A run of 3 helical transmembrane segments spans residues 167–187 (VPTF…IMSI), 197–217 (GEVA…IEGM), and 226–246 (GLRV…VMII).

The protein belongs to the Lgt family.

It localises to the cell membrane. The catalysed reaction is L-cysteinyl-[prolipoprotein] + a 1,2-diacyl-sn-glycero-3-phospho-(1'-sn-glycerol) = an S-1,2-diacyl-sn-glyceryl-L-cysteinyl-[prolipoprotein] + sn-glycerol 1-phosphate + H(+). Its pathway is protein modification; lipoprotein biosynthesis (diacylglyceryl transfer). Functionally, catalyzes the transfer of the diacylglyceryl group from phosphatidylglycerol to the sulfhydryl group of the N-terminal cysteine of a prolipoprotein, the first step in the formation of mature lipoproteins. The chain is Phosphatidylglycerol--prolipoprotein diacylglyceryl transferase from Streptococcus agalactiae serotype Ia (strain ATCC 27591 / A909 / CDC SS700).